Consider the following 131-residue polypeptide: Large ribosomal subunit protein bL17 (131 aa).

It belongs to the bacterial ribosomal protein bL17 family. Part of the 50S ribosomal subunit. Contacts protein L32.

This chain is Large ribosomal subunit protein bL17, found in Shewanella baltica (strain OS223).